The sequence spans 117 residues: Immunoglobulin lambda variable 1-51 (117 aa).

The signal sequence occupies residues 1-19; that stretch reads MTCSPLLLTLLIHCTGSWA. The residue at position 20 (Gln-20) is a Pyrrolidone carboxylic acid. Residues 20–44 are framework-1; sequence QSVLTQPPSVSAAPGQKVTISCSGS. An Ig-like domain is found at 20–117; that stretch reads QSVLTQPPSV…CGTWDSSLSA (98 aa). A disulfide bridge connects residues Cys-41 and Cys-108. Residues 45–52 are complementarity-determining-1; it reads SSNIGNNY. Residues 53–69 are framework-2; that stretch reads VSWYQQLPGTAPKLLIY. The complementarity-determining-2 stretch occupies residues 70 to 72; the sequence is DNN. The segment at 73–108 is framework-3; the sequence is KRPSGIPDRFSGSKSGTSATLGITGLQTGDEADYYC. Residues 109-117 form a complementarity-determining-3 region; sequence GTWDSSLSA.

As to quaternary structure, immunoglobulins are composed of two identical heavy chains and two identical light chains; disulfide-linked.

It localises to the secreted. The protein resides in the cell membrane. Functionally, v region of the variable domain of immunoglobulin light chains that participates in the antigen recognition. Immunoglobulins, also known as antibodies, are membrane-bound or secreted glycoproteins produced by B lymphocytes. In the recognition phase of humoral immunity, the membrane-bound immunoglobulins serve as receptors which, upon binding of a specific antigen, trigger the clonal expansion and differentiation of B lymphocytes into immunoglobulins-secreting plasma cells. Secreted immunoglobulins mediate the effector phase of humoral immunity, which results in the elimination of bound antigens. The antigen binding site is formed by the variable domain of one heavy chain, together with that of its associated light chain. Thus, each immunoglobulin has two antigen binding sites with remarkable affinity for a particular antigen. The variable domains are assembled by a process called V-(D)-J rearrangement and can then be subjected to somatic hypermutations which, after exposure to antigen and selection, allow affinity maturation for a particular antigen. This chain is Immunoglobulin lambda variable 1-51, found in Homo sapiens (Human).